The sequence spans 232 residues: Phosphatidylserine decarboxylase proenzyme (232 aa).

Ser-190 functions as the Schiff-base intermediate with substrate; via pyruvic acid in the catalytic mechanism. Pyruvic acid (Ser); by autocatalysis is present on Ser-190.

The protein belongs to the phosphatidylserine decarboxylase family. PSD-A subfamily. Heterodimer of a large membrane-associated beta subunit and a small pyruvoyl-containing alpha subunit. It depends on pyruvate as a cofactor. Is synthesized initially as an inactive proenzyme. Formation of the active enzyme involves a self-maturation process in which the active site pyruvoyl group is generated from an internal serine residue via an autocatalytic post-translational modification. Two non-identical subunits are generated from the proenzyme in this reaction, and the pyruvate is formed at the N-terminus of the alpha chain, which is derived from the carboxyl end of the proenzyme. The post-translation cleavage follows an unusual pathway, termed non-hydrolytic serinolysis, in which the side chain hydroxyl group of the serine supplies its oxygen atom to form the C-terminus of the beta chain, while the remainder of the serine residue undergoes an oxidative deamination to produce ammonia and the pyruvoyl prosthetic group on the alpha chain.

The protein resides in the cell membrane. The catalysed reaction is a 1,2-diacyl-sn-glycero-3-phospho-L-serine + H(+) = a 1,2-diacyl-sn-glycero-3-phosphoethanolamine + CO2. The protein operates within phospholipid metabolism; phosphatidylethanolamine biosynthesis; phosphatidylethanolamine from CDP-diacylglycerol: step 2/2. Functionally, catalyzes the formation of phosphatidylethanolamine (PtdEtn) from phosphatidylserine (PtdSer). In Rhodopseudomonas palustris (strain BisB5), this protein is Phosphatidylserine decarboxylase proenzyme.